Reading from the N-terminus, the 393-residue chain is Acyl-homoserine-lactone synthase OpaM (393 aa).

Belongs to the LuxM / VanM family.

The enzyme catalyses a fatty acyl-[ACP] + S-adenosyl-L-methionine = an N-acyl-L-homoserine lactone + S-methyl-5'-thioadenosine + holo-[ACP] + H(+). The sequence is that of Acyl-homoserine-lactone synthase OpaM (opaM) from Vibrio parahaemolyticus serotype O3:K6 (strain RIMD 2210633).